A 62-amino-acid polypeptide reads, in one-letter code: Prokaryotic ubiquitin-like protein Pup (62 aa).

Positions 1-36 (MEKSSQIHGSKPGDDNADEPENAAGQSQIRKQGADD) are disordered. The interval 18–56 (DEPENAAGQSQIRKQGADDLLDEIDGLLESNAEEFVRSY) is ARC ATPase binding. Q62 carries the deamidated glutamine modification. An Isoglutamyl lysine isopeptide (Gln-Lys) (interchain with K-? in acceptor proteins) cross-link involves residue Q62.

It belongs to the prokaryotic ubiquitin-like protein family. In terms of assembly, strongly interacts with the proteasome-associated ATPase ARC through a hydrophobic interface; the interacting region of Pup lies in its C-terminal half. There is one Pup binding site per ARC hexamer ring. In terms of processing, is modified by deamidation of its C-terminal glutamine to glutamate by the deamidase Dop, a prerequisite to the subsequent pupylation process.

It participates in protein degradation; proteasomal Pup-dependent pathway. Its function is as follows. Protein modifier that is covalently attached to lysine residues of substrate proteins, thereby targeting them for proteasomal degradation. The tagging system is termed pupylation. The polypeptide is Prokaryotic ubiquitin-like protein Pup (Corynebacterium kroppenstedtii (strain DSM 44385 / JCM 11950 / CIP 105744 / CCUG 35717)).